We begin with the raw amino-acid sequence, 448 residues long: ATP-dependent protease ATPase subunit HslU (448 aa).

Residues valine 21, 63 to 68, aspartate 261, glutamate 326, and arginine 398 contribute to the ATP site; that span reads GVGKTE.

The protein belongs to the ClpX chaperone family. HslU subfamily. As to quaternary structure, a double ring-shaped homohexamer of HslV is capped on each side by a ring-shaped HslU homohexamer. The assembly of the HslU/HslV complex is dependent on binding of ATP.

The protein localises to the cytoplasm. Its function is as follows. ATPase subunit of a proteasome-like degradation complex; this subunit has chaperone activity. The binding of ATP and its subsequent hydrolysis by HslU are essential for unfolding of protein substrates subsequently hydrolyzed by HslV. HslU recognizes the N-terminal part of its protein substrates and unfolds these before they are guided to HslV for hydrolysis. The protein is ATP-dependent protease ATPase subunit HslU of Persephonella marina (strain DSM 14350 / EX-H1).